The primary structure comprises 425 residues: Adenylosuccinate synthetase (425 aa).

GTP-binding positions include Gly-12 to Lys-18 and Gly-40 to Thr-42. Asp-13 acts as the Proton acceptor in catalysis. Residues Asp-13 and Gly-40 each contribute to the Mg(2+) site. Residues Asp-13 to Lys-16, Asn-38 to His-41, Thr-129, Arg-143, Asn-221, Thr-236, and Arg-300 each bind IMP. His-41 acts as the Proton donor in catalysis. Residue Val-296–Arg-302 coordinates substrate. GTP contacts are provided by residues Arg-302, Lys-328–Asp-330, and Gly-410–Gly-412.

The protein belongs to the adenylosuccinate synthetase family. In terms of assembly, homodimer. Mg(2+) serves as cofactor.

The protein localises to the cytoplasm. The enzyme catalyses IMP + L-aspartate + GTP = N(6)-(1,2-dicarboxyethyl)-AMP + GDP + phosphate + 2 H(+). It participates in purine metabolism; AMP biosynthesis via de novo pathway; AMP from IMP: step 1/2. In terms of biological role, plays an important role in the de novo pathway and in the salvage pathway of purine nucleotide biosynthesis. Catalyzes the first committed step in the biosynthesis of AMP from IMP. The sequence is that of Adenylosuccinate synthetase from Phaeosphaeria nodorum (strain SN15 / ATCC MYA-4574 / FGSC 10173) (Glume blotch fungus).